Reading from the N-terminus, the 308-residue chain is D-alanine--D-alanine ligase (308 aa).

One can recognise an ATP-grasp domain in the interval 102–302 (KKVAAAAGVA…FGELLSWMVE (201 aa)). 128 to 183 (PMEPPYVVKPVREGSSFGVVIVKEDQTHPPQIISSAEWNYGAEVLVEKYIPGRELT) is a binding site for ATP. Mg(2+) contacts are provided by D252, E269, and N271.

It belongs to the D-alanine--D-alanine ligase family. Mg(2+) is required as a cofactor. Requires Mn(2+) as cofactor.

The protein resides in the cytoplasm. The enzyme catalyses 2 D-alanine + ATP = D-alanyl-D-alanine + ADP + phosphate + H(+). It participates in cell wall biogenesis; peptidoglycan biosynthesis. In terms of biological role, cell wall formation. The sequence is that of D-alanine--D-alanine ligase from Brucella anthropi (strain ATCC 49188 / DSM 6882 / CCUG 24695 / JCM 21032 / LMG 3331 / NBRC 15819 / NCTC 12168 / Alc 37) (Ochrobactrum anthropi).